The chain runs to 244 residues: Cobalt transport protein CbiM (244 aa).

An N-terminal signal peptide occupies residues 1–28 (MKKLWKFIPFVLMGVIYFTLTNPESAHA). 6 helical membrane-spanning segments follow: residues 37–57 (PVKW…LGLI), 71–91 (LLLA…IPSV), 103–123 (LATV…VLLF), 135–155 (TLGA…FVVY), 166–186 (SVSI…TTSV), and 206–226 (FMAI…LLTV).

It belongs to the CbiM family. Forms an energy-coupling factor (ECF) transporter complex composed of an ATP-binding protein (A component, CbiO), a transmembrane protein (T component, CbiQ) and 2 possible substrate-capture proteins (S components, CbiM and CbiN) of unknown stoichimetry.

Its subcellular location is the cell membrane. It functions in the pathway cofactor biosynthesis; adenosylcobalamin biosynthesis. Part of the energy-coupling factor (ECF) transporter complex CbiMNOQ involved in cobalt import. This Listeria seeligeri serovar 1/2b (strain ATCC 35967 / DSM 20751 / CCM 3970 / CCUG 15530 / CIP 100100 / LMG 11386 / NCTC 11856 / SLCC 3954 / 1120) protein is Cobalt transport protein CbiM.